A 457-amino-acid chain; its full sequence is Bifunctional protein GlmU (457 aa).

Residues 1 to 230 are pyrophosphorylase; sequence MSKRYAVVLA…FEESLGVNDR (230 aa). Residues 9 to 12, lysine 23, glutamine 73, and 78 to 79 contribute to the UDP-N-acetyl-alpha-D-glucosamine site; these read LAAG and GT. Aspartate 103 contacts Mg(2+). UDP-N-acetyl-alpha-D-glucosamine-binding residues include glycine 140, glutamate 155, asparagine 170, and asparagine 228. Residue asparagine 228 coordinates Mg(2+). Residues 231–251 are linker; sequence IALAEASKLMQRRINENHMRN. The segment at 252 to 457 is N-acetyltransferase; that stretch reads GVTLVNPEST…GYAKHLNHGK (206 aa). UDP-N-acetyl-alpha-D-glucosamine-binding residues include arginine 333 and lysine 351. The active-site Proton acceptor is the histidine 363. UDP-N-acetyl-alpha-D-glucosamine-binding residues include tyrosine 366 and asparagine 377. Acetyl-CoA is bound by residues 386–387, alanine 423, and arginine 440; that span reads NY.

The protein in the N-terminal section; belongs to the N-acetylglucosamine-1-phosphate uridyltransferase family. This sequence in the C-terminal section; belongs to the transferase hexapeptide repeat family. As to quaternary structure, homotrimer. Requires Mg(2+) as cofactor.

It localises to the cytoplasm. The catalysed reaction is alpha-D-glucosamine 1-phosphate + acetyl-CoA = N-acetyl-alpha-D-glucosamine 1-phosphate + CoA + H(+). It carries out the reaction N-acetyl-alpha-D-glucosamine 1-phosphate + UTP + H(+) = UDP-N-acetyl-alpha-D-glucosamine + diphosphate. The protein operates within nucleotide-sugar biosynthesis; UDP-N-acetyl-alpha-D-glucosamine biosynthesis; N-acetyl-alpha-D-glucosamine 1-phosphate from alpha-D-glucosamine 6-phosphate (route II): step 2/2. It functions in the pathway nucleotide-sugar biosynthesis; UDP-N-acetyl-alpha-D-glucosamine biosynthesis; UDP-N-acetyl-alpha-D-glucosamine from N-acetyl-alpha-D-glucosamine 1-phosphate: step 1/1. It participates in bacterial outer membrane biogenesis; LPS lipid A biosynthesis. Functionally, catalyzes the last two sequential reactions in the de novo biosynthetic pathway for UDP-N-acetylglucosamine (UDP-GlcNAc). The C-terminal domain catalyzes the transfer of acetyl group from acetyl coenzyme A to glucosamine-1-phosphate (GlcN-1-P) to produce N-acetylglucosamine-1-phosphate (GlcNAc-1-P), which is converted into UDP-GlcNAc by the transfer of uridine 5-monophosphate (from uridine 5-triphosphate), a reaction catalyzed by the N-terminal domain. In Listeria monocytogenes serotype 4a (strain HCC23), this protein is Bifunctional protein GlmU.